Consider the following 150-residue polypeptide: Nucleoside diphosphate kinase (150 aa).

Residues Lys-9, Phe-57, Arg-85, Thr-91, Arg-102, and Asn-112 each coordinate ATP. Catalysis depends on His-115, which acts as the Pros-phosphohistidine intermediate.

It belongs to the NDK family. Mg(2+) serves as cofactor.

The protein resides in the cytoplasm. It carries out the reaction a 2'-deoxyribonucleoside 5'-diphosphate + ATP = a 2'-deoxyribonucleoside 5'-triphosphate + ADP. It catalyses the reaction a ribonucleoside 5'-diphosphate + ATP = a ribonucleoside 5'-triphosphate + ADP. Its function is as follows. Major role in the synthesis of nucleoside triphosphates other than ATP. The ATP gamma phosphate is transferred to the NDP beta phosphate via a ping-pong mechanism, using a phosphorylated active-site intermediate. The sequence is that of Nucleoside diphosphate kinase from Methanothermobacter thermautotrophicus (strain ATCC 29096 / DSM 1053 / JCM 10044 / NBRC 100330 / Delta H) (Methanobacterium thermoautotrophicum).